A 152-amino-acid polypeptide reads, in one-letter code: Deoxyuridine 5'-triphosphate nucleotidohydrolase (152 aa).

Residues 71-73, asparagine 84, 88-90, and methionine 98 each bind substrate; these read RSG and LID.

Belongs to the dUTPase family. Mg(2+) is required as a cofactor.

The catalysed reaction is dUTP + H2O = dUMP + diphosphate + H(+). The protein operates within pyrimidine metabolism; dUMP biosynthesis; dUMP from dCTP (dUTP route): step 2/2. Its function is as follows. This enzyme is involved in nucleotide metabolism: it produces dUMP, the immediate precursor of thymidine nucleotides and it decreases the intracellular concentration of dUTP so that uracil cannot be incorporated into DNA. The polypeptide is Deoxyuridine 5'-triphosphate nucleotidohydrolase (Salmonella arizonae (strain ATCC BAA-731 / CDC346-86 / RSK2980)).